We begin with the raw amino-acid sequence, 361 residues long: Tyrosine--tRNA ligase (361 aa).

The L-tyrosine site is built by tyrosine 36, tyrosine 162, glutamine 166, aspartate 169, and glutamine 184. The 'KMSKS' region motif lies at 236–240 (KMSKS). Lysine 239 contributes to the ATP binding site.

Belongs to the class-I aminoacyl-tRNA synthetase family. TyrS type 4 subfamily. As to quaternary structure, homodimer.

Its subcellular location is the cytoplasm. The enzyme catalyses tRNA(Tyr) + L-tyrosine + ATP = L-tyrosyl-tRNA(Tyr) + AMP + diphosphate + H(+). Catalyzes the attachment of tyrosine to tRNA(Tyr) in a two-step reaction: tyrosine is first activated by ATP to form Tyr-AMP and then transferred to the acceptor end of tRNA(Tyr). The chain is Tyrosine--tRNA ligase from Saccharolobus islandicus (strain M.14.25 / Kamchatka #1) (Sulfolobus islandicus).